We begin with the raw amino-acid sequence, 407 residues long: Multifunctional CCA protein (407 aa).

ATP-binding residues include Gly-8 and Arg-11. CTP contacts are provided by Gly-8 and Arg-11. 2 residues coordinate Mg(2+): Asp-21 and Asp-23. ATP contacts are provided by Arg-91, Arg-137, and Arg-140. 3 residues coordinate CTP: Arg-91, Arg-137, and Arg-140. The region spanning 228 to 329 is the HD domain; that stretch reads TGIHTLMVAQ…IKIFDKMDVW (102 aa).

It belongs to the tRNA nucleotidyltransferase/poly(A) polymerase family. Bacterial CCA-adding enzyme type 1 subfamily. Monomer. Can also form homodimers and oligomers. Mg(2+) serves as cofactor. It depends on Ni(2+) as a cofactor.

It catalyses the reaction a tRNA precursor + 2 CTP + ATP = a tRNA with a 3' CCA end + 3 diphosphate. It carries out the reaction a tRNA with a 3' CCA end + 2 CTP + ATP = a tRNA with a 3' CCACCA end + 3 diphosphate. Its function is as follows. Catalyzes the addition and repair of the essential 3'-terminal CCA sequence in tRNAs without using a nucleic acid template. Adds these three nucleotides in the order of C, C, and A to the tRNA nucleotide-73, using CTP and ATP as substrates and producing inorganic pyrophosphate. tRNA 3'-terminal CCA addition is required both for tRNA processing and repair. Also involved in tRNA surveillance by mediating tandem CCA addition to generate a CCACCA at the 3' terminus of unstable tRNAs. While stable tRNAs receive only 3'-terminal CCA, unstable tRNAs are marked with CCACCA and rapidly degraded. This is Multifunctional CCA protein from Aliivibrio fischeri (strain ATCC 700601 / ES114) (Vibrio fischeri).